A 984-amino-acid polypeptide reads, in one-letter code: Valine--tRNA ligase (984 aa).

A 'HIGH' region motif is present at residues 65 to 75 (PNVTGSLHMGH). Residues 579 to 583 (KMSKS) carry the 'KMSKS' region motif. Lys-582 provides a ligand contact to ATP. Positions 954–984 (VEVVDAEKAKLAELEGQLTAMTAQMEELKNL) form a coiled coil.

Belongs to the class-I aminoacyl-tRNA synthetase family. ValS type 1 subfamily. Monomer.

It is found in the cytoplasm. It catalyses the reaction tRNA(Val) + L-valine + ATP = L-valyl-tRNA(Val) + AMP + diphosphate. Catalyzes the attachment of valine to tRNA(Val). As ValRS can inadvertently accommodate and process structurally similar amino acids such as threonine, to avoid such errors, it has a 'posttransfer' editing activity that hydrolyzes mischarged Thr-tRNA(Val) in a tRNA-dependent manner. The polypeptide is Valine--tRNA ligase (Psychrobacter arcticus (strain DSM 17307 / VKM B-2377 / 273-4)).